The chain runs to 278 residues: Myb/SANT-like DNA-binding domain-containing protein 1 (278 aa).

The disordered stretch occupies residues 1–27 (MVRGAGPGPSLSALSHPTGASGMAAAE). Positions 44–129 (RNWTDAEMRG…PDWPYYLAID (86 aa)) constitute a Myb-like domain. Residues 138–168 (SCDGKLPDSQPPGPSTSQTEASLSPPAKSTP) form a disordered region.

This is Myb/SANT-like DNA-binding domain-containing protein 1 (MSANTD1) from Homo sapiens (Human).